The chain runs to 478 residues: Ninja-family protein 8 (478 aa).

Disordered stretches follow at residues 1-247 (MDDD…LTPG), 337-374 (FTAK…EKKA), and 454-478 (DAPA…SAEN). The segment covering 23 to 35 (KARDAPLEPKAEP) has biased composition (basic and acidic residues). A compositionally biased stretch (polar residues) spans 169–179 (ISISTDDGSTG). A compositionally biased stretch (acidic residues) spans 180–189 (ENEDVAESEA). Low complexity predominate over residues 233–242 (SFSGSESSSG). Residues 339–358 (AKDKADQTGTKQVDDGKKPQ) are compositionally biased toward basic and acidic residues.

The protein belongs to the Ninja family.

The protein resides in the nucleus. The chain is Ninja-family protein 8 from Zea mays (Maize).